Consider the following 420-residue polypeptide: Calsequestrin-1 (420 aa).

The first 22 residues, 1–22 (MKGPWLVLAALCLSLANLGPRG), serve as a signal peptide directing secretion. Residue Asn-338 is glycosylated (N-linked (GlcNAc...) asparagine). The interval 369–420 (LEGEVNTEDDDDDDDDDDDDDDDDDDDDDDDDDDDDDDDDDDDDDDDDDDDD) is disordered.

It belongs to the calsequestrin family. In terms of assembly, monomer; increases in response to a depletion of intracellular calcium. Homodimer. Homotetramer and homopolymer. Can form linear homooligomers. Ca(2+) ions promote oligomerization. In terms of tissue distribution, detected in skeletal muscle (at protein level). Detected in skeletal muscle.

It is found in the endoplasmic reticulum. Its subcellular location is the sarcoplasmic reticulum. The protein resides in the sarcoplasmic reticulum lumen. It localises to the sarcoplasmic reticulum membrane. The protein localises to the mitochondrion matrix. In terms of biological role, calsequestrin is a high-capacity, moderate affinity, calcium-binding protein and thus acts as an internal calcium store in muscle. Calcium ions are bound by clusters of acidic residues at the protein surface, often at the interface between subunits. Can bind around 80 Ca(2+) ions. Regulates the release of lumenal Ca(2+) via the calcium release channel RYR1; this plays an important role in triggering muscle contraction. Negatively regulates store-operated Ca(2+) entry (SOCE) activity. This chain is Calsequestrin-1, found in Pelophylax lessonae (Pool frog).